The sequence spans 575 residues: Envelope glycoprotein (575 aa).

Positions 1-19 (MLCILILLLHPRLCPVTKG) are cleaved as a signal peptide. At 20 to 517 (GLGKPSGDIY…LTGLNGLLPY (498 aa)) the chain is on the extracellular side. 2 N-linked (GlcNAc...) asparagine; by host glycosylation sites follow: N126 and N239. The CXXC signature appears at 249 to 252 (CWLC). Intrachain disulfides connect C249/C252, C249/C475, and C467/C474. 6 N-linked (GlcNAc...) asparagine; by host glycosylation sites follow: N266, N271, N302, N316, N322, and N349. Positions 390 to 410 (LIPLLVGLGVSTAVATGTAGL) are fusion peptide. 2 coiled-coil regions span residues 411–461 (GVAV…LLTA) and 471–507 (QERC…DNLF). Residues 450 to 466 (LQNRRGLDLLTAEQGGI) form an immunosuppression region. The CX6CC motif lies at 467-475 (CLALQERCC). A glycan (N-linked (GlcNAc...) asparagine; by host) is linked at N479. A helical membrane pass occupies residues 518 to 538 (LLPFLGPLFAIILFFSFAPWI). The Cytoplasmic portion of the chain corresponds to 539–575 (LRRVTALIRDQLNSLLGKPIQIHYHQLATRDLEYGRL). The short motif at 562–565 (YHQL) is the YXXL motif; contains endocytosis signal element.

As to quaternary structure, the mature envelope protein (Env) consists of a trimer of SU-TM heterodimers attached by a labile interchain disulfide bond. Post-translationally, specific enzymatic cleavages in vivo yield mature proteins. Envelope glycoproteins are synthesized as an inactive precursor that is N-glycosylated and processed likely by host cell furin or by a furin-like protease in the Golgi to yield the mature SU and TM proteins. The cleavage site between SU and TM requires the minimal sequence [KR]-X-[KR]-R. In terms of processing, the CXXC motif is highly conserved across a broad range of retroviral envelope proteins. It is thought to participate in the formation of a labile disulfide bond possibly with the CX6CC motif present in the transmembrane protein. Isomerization of the intersubunit disulfide bond to an SU intrachain disulfide bond is thought to occur upon receptor recognition in order to allow membrane fusion.

It is found in the virion membrane. Its subcellular location is the host cell membrane. In terms of biological role, the surface protein (SU) attaches the virus to the host cell by binding to its receptor. This interaction triggers the refolding of the transmembrane protein (TM) and is thought to activate its fusogenic potential by unmasking its fusion peptide. Fusion occurs at the host cell plasma membrane. Functionally, the transmembrane protein (TM) acts as a class I viral fusion protein. Under the current model, the protein has at least 3 conformational states: pre-fusion native state, pre-hairpin intermediate state, and post-fusion hairpin state. During viral and target cell membrane fusion, the coiled coil regions (heptad repeats) assume a trimer-of-hairpins structure, positioning the fusion peptide in close proximity to the C-terminal region of the ectodomain. The formation of this structure appears to drive apposition and subsequent fusion of viral and target cell membranes. Membranes fusion leads to delivery of the nucleocapsid into the cytoplasm. In Squirrel monkey retrovirus (SMRV-H), this protein is Envelope glycoprotein (env).